A 324-amino-acid chain; its full sequence is Elongation factor P--(R)-beta-lysine ligase (324 aa).

75-77 (SPE) lines the substrate pocket. ATP is bound by residues 99-101 (RNE) and Asn-108. A substrate-binding site is contributed by Tyr-117. 243-244 (EL) provides a ligand contact to ATP. Glu-250 lines the substrate pocket. Residue Gly-299 participates in ATP binding.

This sequence belongs to the class-II aminoacyl-tRNA synthetase family. EpmA subfamily. Homodimer.

It carries out the reaction D-beta-lysine + L-lysyl-[protein] + ATP = N(6)-((3R)-3,6-diaminohexanoyl)-L-lysyl-[protein] + AMP + diphosphate + H(+). In terms of biological role, with EpmB is involved in the beta-lysylation step of the post-translational modification of translation elongation factor P (EF-P). Catalyzes the ATP-dependent activation of (R)-beta-lysine produced by EpmB, forming a lysyl-adenylate, from which the beta-lysyl moiety is then transferred to the epsilon-amino group of a conserved specific lysine residue in EF-P. This chain is Elongation factor P--(R)-beta-lysine ligase, found in Pseudoalteromonas translucida (strain TAC 125).